The following is a 605-amino-acid chain: UPF0313 protein GSU2873 (605 aa).

A Radical SAM core domain is found at 291 to 561; that stretch reads AYEQIRASVT…LQKALLLWHL (271 aa). The [4Fe-4S] cluster site is built by cysteine 305, cysteine 309, and cysteine 312. A disordered region spans residues 586-605; sequence GGAAGGGGGRSGSGFRPGRT. Residues 587 to 597 are compositionally biased toward gly residues; the sequence is GAAGGGGGRSG.

It belongs to the UPF0313 family. Requires [4Fe-4S] cluster as cofactor.

The chain is UPF0313 protein GSU2873 from Geobacter sulfurreducens (strain ATCC 51573 / DSM 12127 / PCA).